A 310-amino-acid chain; its full sequence is Ribosome production factor 2 homolog (310 aa).

The Brix domain occupies 29–239; the sequence is KKTLILHGTK…VRRHRYPVES (211 aa). Residues 281–310 form a disordered region; that stretch reads LSNDVKGLKRERREAKKNKDHSKKQKINPE. Positions 295 to 310 are enriched in basic residues; that stretch reads AKKNKDHSKKQKINPE.

Belongs to the RPF2 family.

It localises to the nucleus. It is found in the nucleolus. The polypeptide is Ribosome production factor 2 homolog (Oryza sativa subsp. japonica (Rice)).